The sequence spans 344 residues: Biotin synthase (344 aa).

The 228-residue stretch at 40-267 folds into the Radical SAM core domain; the sequence is AQVQVSTLLS…KSMVRLSAGR (228 aa). [4Fe-4S] cluster-binding residues include C55, C59, and C62. The [2Fe-2S] cluster site is built by C99, C130, C190, and R262.

It belongs to the radical SAM superfamily. Biotin synthase family. As to quaternary structure, homodimer. The cofactor is [4Fe-4S] cluster. Requires [2Fe-2S] cluster as cofactor.

The enzyme catalyses (4R,5S)-dethiobiotin + (sulfur carrier)-SH + 2 reduced [2Fe-2S]-[ferredoxin] + 2 S-adenosyl-L-methionine = (sulfur carrier)-H + biotin + 2 5'-deoxyadenosine + 2 L-methionine + 2 oxidized [2Fe-2S]-[ferredoxin]. The protein operates within cofactor biosynthesis; biotin biosynthesis; biotin from 7,8-diaminononanoate: step 2/2. In terms of biological role, catalyzes the conversion of dethiobiotin (DTB) to biotin by the insertion of a sulfur atom into dethiobiotin via a radical-based mechanism. This is Biotin synthase from Xanthomonas axonopodis pv. citri (strain 306).